The primary structure comprises 939 residues: Protein translocase subunit SecA 1 (939 aa).

ATP-binding positions include Gln85, 103-107 (GEGKT), and Asp504. A disordered region spans residues 848 to 939 (EVPVEDEKPS…QSKGGRRRKK (92 aa)). 3 stretches are compositionally biased toward basic and acidic residues: residues 852–863 (EDEKPSLEKEDA), 872–889 (PEIRAKGLEAPQRPDRLH), and 914–925 (PVRSEADGLTRA). Over residues 926-939 (ERRKQSKGGRRRKK) the composition is skewed to basic residues.

Belongs to the SecA family. In terms of assembly, monomer and homodimer. Part of the essential Sec protein translocation apparatus which comprises SecA, SecYEG and auxiliary proteins SecDF. Other proteins may also be involved.

The protein resides in the cell membrane. The protein localises to the cytoplasm. The enzyme catalyses ATP + H2O + cellular proteinSide 1 = ADP + phosphate + cellular proteinSide 2.. Its function is as follows. Part of the Sec protein translocase complex. Interacts with the SecYEG preprotein conducting channel. Has a central role in coupling the hydrolysis of ATP to the transfer of proteins into and across the cell membrane, serving as an ATP-driven molecular motor driving the stepwise translocation of polypeptide chains across the membrane. This chain is Protein translocase subunit SecA 1, found in Streptomyces avermitilis (strain ATCC 31267 / DSM 46492 / JCM 5070 / NBRC 14893 / NCIMB 12804 / NRRL 8165 / MA-4680).